A 110-amino-acid chain; its full sequence is Thiosulfate sulfurtransferase GlpE (110 aa).

A Rhodanese domain is found at 17–105 (KQEGAVVVDI…WRATYPAETA (89 aa)). The Cysteine persulfide intermediate role is filled by Cys65.

Belongs to the GlpE family.

The protein resides in the cytoplasm. It carries out the reaction thiosulfate + hydrogen cyanide = thiocyanate + sulfite + 2 H(+). The catalysed reaction is thiosulfate + [thioredoxin]-dithiol = [thioredoxin]-disulfide + hydrogen sulfide + sulfite + 2 H(+). In terms of biological role, transferase that catalyzes the transfer of sulfur from thiosulfate to thiophilic acceptors such as cyanide or dithiols. May function in a CysM-independent thiosulfate assimilation pathway by catalyzing the conversion of thiosulfate to sulfite, which can then be used for L-cysteine biosynthesis. This chain is Thiosulfate sulfurtransferase GlpE, found in Pseudomonas putida (strain GB-1).